Consider the following 85-residue polypeptide: Homeobox protein knotted-1-like 5 (85 aa).

One can recognise an ELK domain in the interval 1–21 (ELKEMLLKKYSGCLSRLRSEF). Residues 22–85 (LKKRKKGKLP…NQRKRHWKPS (64 aa)) constitute a DNA-binding region (homeobox; TALE-type).

Belongs to the TALE/KNOX homeobox family. As to expression, strongly expressed in ear inflorescence primordia and shoot meristem. Weakly expressed in embryos. Absent from leaves.

The protein resides in the nucleus. Its function is as follows. Probably binds to the DNA sequence 5'-TGAC-3'. This chain is Homeobox protein knotted-1-like 5 (KNOX5), found in Zea mays (Maize).